The chain runs to 370 residues: tRNA-specific 2-thiouridylase MnmA (370 aa).

Residues 19–26 and Leu45 contribute to the ATP site; that span reads AMSGGVDS. Cys113 (nucleophile) is an active-site residue. The cysteines at positions 113 and 209 are disulfide-linked. Gly137 is a binding site for ATP. Positions 159 to 161 are interaction with tRNA; it reads KDQ. Cys209 (cysteine persulfide intermediate) is an active-site residue.

It belongs to the MnmA/TRMU family.

It localises to the cytoplasm. The enzyme catalyses S-sulfanyl-L-cysteinyl-[protein] + uridine(34) in tRNA + AH2 + ATP = 2-thiouridine(34) in tRNA + L-cysteinyl-[protein] + A + AMP + diphosphate + H(+). Functionally, catalyzes the 2-thiolation of uridine at the wobble position (U34) of tRNA, leading to the formation of s(2)U34. This is tRNA-specific 2-thiouridylase MnmA from Rickettsia conorii (strain ATCC VR-613 / Malish 7).